Consider the following 919-residue polypeptide: Chaperone protein ClpC2, chloroplastic (919 aa).

Residues 1–54 (MAGTLLQPVALGTTFAGRVSGQRWKSHGTRRPPSMLAMSLSRPVKMAAFVGLRS) constitute a chloroplast transit peptide. The Clp R domain occupies 89-231 (FERFTEKAIK…RTQVIRMIGE (143 aa)). 2 repeat regions span residues 92-157 (FTEK…IGRG) and 167-231 (FTPR…MIGE). The interval 252–499 (LEEYGTNLTK…RVRLRHAQVP (248 aa)) is i. Residue 297 to 304 (GEPGVGKT) coordinates ATP. A UVR domain is found at 506–541 (DKELKQITKDKNEAVRSQDFEKAGELRDREMELKAQ). The segment at 566–757 (VNEADIQHIV…LLIMTSNVGS (192 aa)) is II. Residue 640 to 647 (GPTGVGKS) coordinates ATP.

It belongs to the ClpA/ClpB family. ClpC subfamily.

It localises to the plastid. The protein resides in the chloroplast. Its function is as follows. Molecular chaperone that may interact with a ClpP-like protease involved in degradation of denatured proteins in the chloroplast. The polypeptide is Chaperone protein ClpC2, chloroplastic (CLPC2) (Oryza sativa subsp. japonica (Rice)).